The following is a 267-amino-acid chain: Myb-related protein Hv1 (267 aa).

HTH myb-type domains lie at 9–61 and 62–116; these read KAHT…INYL and RPDL…RRKL. DNA-binding regions (H-T-H motif) lie at residues 37–61 and 89–112; these read WRSL…INYL and WSLI…NTHI.

Germinating seed and apical meristem of shoot and root.

The protein resides in the nucleus. Its function is as follows. Possible transcription activator in response to an external signal. May be involved in the regulation of flavonoid biosynthesis. The chain is Myb-related protein Hv1 (MYB1) from Hordeum vulgare (Barley).